The primary structure comprises 554 residues: Urocanate hydratase (554 aa).

NAD(+)-binding positions include 52 to 53 (GG), glutamine 130, 176 to 178 (GMG), glutamate 196, arginine 201, 242 to 243 (NA), 263 to 267 (QTSAH), 273 to 274 (YL), and tyrosine 322. Residue cysteine 410 is part of the active site. Glycine 492 lines the NAD(+) pocket.

The protein belongs to the urocanase family. It depends on NAD(+) as a cofactor.

Its subcellular location is the cytoplasm. The catalysed reaction is 4-imidazolone-5-propanoate = trans-urocanate + H2O. The protein operates within amino-acid degradation; L-histidine degradation into L-glutamate; N-formimidoyl-L-glutamate from L-histidine: step 2/3. In terms of biological role, catalyzes the conversion of urocanate to 4-imidazolone-5-propionate. The protein is Urocanate hydratase of Shewanella halifaxensis (strain HAW-EB4).